Here is a 427-residue protein sequence, read N- to C-terminus: Serine--tRNA ligase (427 aa).

232 to 234 (TAE) is a binding site for L-serine. 263–265 (RSE) provides a ligand contact to ATP. Glu286 lines the L-serine pocket. 350–353 (EISS) contributes to the ATP binding site. Ser385 contacts L-serine.

This sequence belongs to the class-II aminoacyl-tRNA synthetase family. Type-1 seryl-tRNA synthetase subfamily. As to quaternary structure, homodimer. The tRNA molecule binds across the dimer.

It localises to the cytoplasm. It catalyses the reaction tRNA(Ser) + L-serine + ATP = L-seryl-tRNA(Ser) + AMP + diphosphate + H(+). It carries out the reaction tRNA(Sec) + L-serine + ATP = L-seryl-tRNA(Sec) + AMP + diphosphate + H(+). Its pathway is aminoacyl-tRNA biosynthesis; selenocysteinyl-tRNA(Sec) biosynthesis; L-seryl-tRNA(Sec) from L-serine and tRNA(Sec): step 1/1. Functionally, catalyzes the attachment of serine to tRNA(Ser). Is also able to aminoacylate tRNA(Sec) with serine, to form the misacylated tRNA L-seryl-tRNA(Sec), which will be further converted into selenocysteinyl-tRNA(Sec). This is Serine--tRNA ligase from Aromatoleum aromaticum (strain DSM 19018 / LMG 30748 / EbN1) (Azoarcus sp. (strain EbN1)).